The following is a 366-amino-acid chain: 5-hydroxytryptamine receptor 1F (366 aa).

Topologically, residues 1 to 24 (MDFLNASDQNLTSEELLNRMPSKI) are extracellular. 2 N-linked (GlcNAc...) asparagine glycosylation sites follow: asparagine 5 and asparagine 10. Residues 25–49 (LVSLTLSGLALMTTTINSLVIAAII) form a helical membrane-spanning segment. Topologically, residues 50 to 59 (VTRKLHHPAN) are cytoplasmic. The helical transmembrane segment at 60-81 (YLICSLAVTDFLVAVLVMPFSI) threads the bilayer. Residues 82-96 (VYIVRESWIMGQVLC) are Extracellular-facing. Cysteine 96 and cysteine 172 are disulfide-bonded. A helical transmembrane segment spans residues 97-119 (DIWLSVDIICCTCSILHLSAIAL). 2 residues coordinate serotonin: aspartate 103 and cysteine 107. Residues 120-122 (DRY) carry the DRY motif; important for ligand-induced conformation changes motif. The Cytoplasmic portion of the chain corresponds to 120-139 (DRYRAITDAVEYARKRTPRH). The helical transmembrane segment at 140–159 (AGIMITIVWVISVFISMPPL) threads the bilayer. Residues 160 to 178 (FWRHQGTSRDDECVIKHDH) lie on the Extracellular side of the membrane. Residues 179-202 (IVSTIYSTFGAFYIPLVLILILYY) traverse the membrane as a helical segment. Residues 203–291 (KIYRAARTLY…KISGTRERKA (89 aa)) lie on the Cytoplasmic side of the membrane. The helical transmembrane segment at 292 to 315 (ATTLGLILGAFVICWLPFFVKELV) threads the bilayer. Over 316–327 (VNVCEKCKISEE) the chain is Extracellular. The helical transmembrane segment at 328–350 (MSNFLAWLGYLNSLINPLIYTIF) threads the bilayer. Residues 343–347 (NPLIY) carry the NPxxY motif; important for ligand-induced conformation changes and signaling motif. Over 351–366 (NEDFKKAFQKLVRCRY) the chain is Cytoplasmic.

It belongs to the G-protein coupled receptor 1 family. In terms of tissue distribution, detected in hippocampus.

The protein resides in the cell membrane. Functionally, G-protein coupled receptor for 5-hydroxytryptamine (serotonin). Also functions as a receptor for various alkaloids and psychoactive substances. Ligand binding causes a conformation change that triggers signaling via guanine nucleotide-binding proteins (G proteins) and modulates the activity of downstream effectors, such as adenylate cyclase. HTR1F is coupled to G(i)/G(o) G alpha proteins and mediates inhibitory neurotransmission by inhibiting adenylate cyclase activity. This chain is 5-hydroxytryptamine receptor 1F (Htr1f), found in Mus musculus (Mouse).